The sequence spans 181 residues: Putative ankyrin repeat protein RF_0782 (181 aa).

2 ANK repeats span residues 24–53 (YHYS…DINF) and 54–83 (GSTP…NTQI).

The sequence is that of Putative ankyrin repeat protein RF_0782 from Rickettsia felis (strain ATCC VR-1525 / URRWXCal2) (Rickettsia azadi).